We begin with the raw amino-acid sequence, 283 residues long: Protein MGARP (283 aa).

The segment at 1–36 is disordered; it reads MYLRRAVSKTLALPRRAPPGPAPLGKDASLRRMSSR. The Cytoplasmic portion of the chain corresponds to 1 to 41; it reads MYLRRAVSKTLALPRRAPPGPAPLGKDASLRRMSSRKFPGT. The chain crosses the membrane as a helical; Anchor for type IV membrane protein span at residues 42 to 64; the sequence is SGSNMIYYLVVGVTVSAGGYYTY. Residues 65-283 lie on the Mitochondrial intermembrane side of the membrane; that stretch reads KALTSKQVRR…VTEETASPQG (219 aa). Disordered stretches follow at residues 78 to 101 and 118 to 283; these read VAEPKEQTKAELQPLPGEKEEHVA and AESV…SPQG. Residues 128–160 show a composition bias toward low complexity; it reads EAAVVLPEESQASAPSEVPAEAAVVEASLSSSE. Polar residues-rich tracts occupy residues 171-184 and 199-220; these read VETTESVPESTQEV and ADTSQEGADTSQEGADTSQEGA. Residues 221–245 are compositionally biased toward basic and acidic residues; sequence DTTKEEADNSKEAEGTTTEDPRSIS.

Interacts with RHOT1/Miro-1, RHOT2/Miro-2, TRAK1/OIP106 and TRAK2/GRIF1. As to expression, expressed in the ovary, testis, brain, adrenal glands and the compartments of the visual nervous system. Expressed in corneal endothelium (CE) (at protein level). Expressed in steroidogenic tissues with the highest level of expression observed in the adrenal gland. Weakly expressed in placenta. Weakly expressed in astrocytes and neurons under normoxia. Strongly expressed in astrocytes and neurons under hypoxia. Expressed in each layer of the retina, with particularly higher staining in the inner segment of the photoreceptor (IS), the outer plexiform layer (OPL) and the ganglion cell layer (GCL).

The protein resides in the mitochondrion. The protein localises to the mitochondrion outer membrane. Its subcellular location is the mitochondrion inner membrane. In terms of biological role, plays a role in the trafficking of mitochondria along microtubules. Regulates the kinesin-mediated axonal transport of mitochondria to nerve terminals along microtubules during hypoxia. Participates in the translocation of TRAK2/GRIF1 from the cytoplasm to the mitochondrion. Also plays a role in steroidogenesis through maintenance of mitochondrial abundance and morphology. Plays an inhibitory role during neocortex development by regulating mitochondrial morphology, distribution and motility in neocortical neurons. This is Protein MGARP (Mgarp) from Mus musculus (Mouse).